Consider the following 468-residue polypeptide: ERO1-like protein alpha (468 aa).

An N-terminal signal peptide occupies residues 1-23 (MGHRWGFLIVFLGAVGLLGSGYG). 8 disulfides stabilise this stretch: Cys35-Cys48, Cys37-Cys46, Cys85-Cys391, Cys94-Cys99, Cys94-Cys131, Cys99-Cys104, Cys208-Cys241, and Cys394-Cys397. Ser106, Ser143, and Ser145 each carry phosphoserine. FAD-binding residues include Arg187, Thr189, and Trp200. Ser252 and His255 together coordinate FAD. N-linked (GlcNAc...) asparagine glycosylation occurs at Asn280. FAD contacts are provided by Arg287 and Arg300. N-linked (GlcNAc...) asparagine glycosylation occurs at Asn384.

The protein belongs to the EROs family. In terms of assembly, predominantly monomer. May function both as a monomer and a homodimer. Interacts with PDILT. Interacts with ERP44; the interaction results in retention of ERO1A in the endoplasmic reticulum. It depends on FAD as a cofactor. Post-translationally, the Cys-94/Cys-99 and Cys-394/Cys-397 disulfide bonds constitute the redox-active center. The Cys-94/Cys-99 disulfide bond may accept electron from P4HB and funnel them to the active site disulfide Cys-394/Cys-397. The regulatory Cys-99/Cys-104 disulfide bond stabilizes the other regulatory bond Cys-94/Cys-131. In terms of processing, phosphorylated on Ser-145 by FAM20C in the Golgi which increases its enzymatic activity. Phosphorylation is induced by lactation. It is also induced by hypoxia and reductive stress.

Its subcellular location is the endoplasmic reticulum membrane. The protein localises to the golgi apparatus lumen. It localises to the secreted. The protein resides in the cell projection. It is found in the dendrite. Enzyme activity is tightly regulated to prevent the accumulation of reactive oxygen species in the endoplasmic reticulum. Reversibly down-regulated by the formation of disulfide bonds between the active site Cys-94 and Cys-131, and between Cys-99 and Cys-104. Glutathione may be required to regulate its activity in the endoplasmic reticulum. Its function is as follows. Oxidoreductase involved in disulfide bond formation in the endoplasmic reticulum. Efficiently reoxidizes P4HB/PDI, the enzyme catalyzing protein disulfide formation, in order to allow P4HB to sustain additional rounds of disulfide formation. Following P4HB reoxidation, passes its electrons to molecular oxygen via FAD, leading to the production of reactive oxygen species (ROS) in the cell. Required for the proper folding of immunoglobulins. Plays an important role in ER stress-induced, CHOP-dependent apoptosis by activating the inositol 1,4,5-trisphosphate receptor IP3R1. The polypeptide is ERO1-like protein alpha (Sus scrofa (Pig)).